The primary structure comprises 592 residues: A-type ATP synthase subunit A (592 aa).

233-240 contributes to the ATP binding site; it reads GPFGSGKT.

The protein belongs to the ATPase alpha/beta chains family. In terms of assembly, has multiple subunits with at least A(3), B(3), C, D, E, F, H, I and proteolipid K(x).

It localises to the cell membrane. It carries out the reaction ATP + H2O + 4 H(+)(in) = ADP + phosphate + 5 H(+)(out). Component of the A-type ATP synthase that produces ATP from ADP in the presence of a proton gradient across the membrane. The A chain is the catalytic subunit. The chain is A-type ATP synthase subunit A from Saccharolobus islandicus (strain Y.G.57.14 / Yellowstone #1) (Sulfolobus islandicus).